We begin with the raw amino-acid sequence, 447 residues long: Dihydroorotase (447 aa).

Zn(2+) contacts are provided by His81 and His83. Substrate-binding positions include 83–85 (HFR) and Asn115. Residues Asp171, His198, and His252 each contribute to the Zn(2+) site. Asn298 is a binding site for substrate. Asp325 lines the Zn(2+) pocket. Asp325 is a catalytic residue. Substrate contacts are provided by residues His329 and 343–344 (FG).

The protein belongs to the metallo-dependent hydrolases superfamily. DHOase family. Class I DHOase subfamily. Zn(2+) serves as cofactor.

It carries out the reaction (S)-dihydroorotate + H2O = N-carbamoyl-L-aspartate + H(+). Its pathway is pyrimidine metabolism; UMP biosynthesis via de novo pathway; (S)-dihydroorotate from bicarbonate: step 3/3. In terms of biological role, catalyzes the reversible cyclization of carbamoyl aspartate to dihydroorotate. This is Dihydroorotase from Ehrlichia chaffeensis (strain ATCC CRL-10679 / Arkansas).